Consider the following 122-residue polypeptide: Holo-[acyl-carrier-protein] synthase (122 aa).

D9 and E58 together coordinate Mg(2+).

This sequence belongs to the P-Pant transferase superfamily. AcpS family. Requires Mg(2+) as cofactor.

It localises to the cytoplasm. It carries out the reaction apo-[ACP] + CoA = holo-[ACP] + adenosine 3',5'-bisphosphate + H(+). In terms of biological role, transfers the 4'-phosphopantetheine moiety from coenzyme A to a Ser of acyl-carrier-protein. The chain is Holo-[acyl-carrier-protein] synthase from Chlamydia pneumoniae (Chlamydophila pneumoniae).